We begin with the raw amino-acid sequence, 685 residues long: Mesothelin-like protein (685 aa).

A signal peptide spans 1–32; the sequence is MSRTLRPSAMGSRVGALASPGLALLLSLTAHC. The Extracellular portion of the chain corresponds to 33-627; the sequence is SGPQAKGLPK…GVSHTSGSPP (595 aa). Asn315 and Asn400 each carry an N-linked (GlcNAc...) asparagine glycan. The interval 603 to 624 is disordered; sequence PPSSLIHSLDPPGNDGVSHTSG. The chain crosses the membrane as a helical span at residues 628 to 648; sequence VHLGYLSLAVALPSSLLWLLL. Over 649–685 the chain is Cytoplasmic; sequence CQLPSGQMATAHRTLGPMALAQGSWTPEHQIPEKRSC.

Belongs to the mesothelin family.

Its subcellular location is the membrane. Its function is as follows. May play a role in cellular adhesion. This Mus musculus (Mouse) protein is Mesothelin-like protein (Mslnl).